Here is a 334-residue protein sequence, read N- to C-terminus: Phosphoribosylformylglycinamidine cyclo-ligase (334 aa).

The protein belongs to the AIR synthase family.

The protein resides in the cytoplasm. It carries out the reaction 2-formamido-N(1)-(5-O-phospho-beta-D-ribosyl)acetamidine + ATP = 5-amino-1-(5-phospho-beta-D-ribosyl)imidazole + ADP + phosphate + H(+). The protein operates within purine metabolism; IMP biosynthesis via de novo pathway; 5-amino-1-(5-phospho-D-ribosyl)imidazole from N(2)-formyl-N(1)-(5-phospho-D-ribosyl)glycinamide: step 2/2. The protein is Phosphoribosylformylglycinamidine cyclo-ligase of Thermococcus kodakarensis (strain ATCC BAA-918 / JCM 12380 / KOD1) (Pyrococcus kodakaraensis (strain KOD1)).